Reading from the N-terminus, the 743-residue chain is Catalase-peroxidase (743 aa).

The disordered stretch occupies residues 1 to 29 (MNAESGENAGGGCPLGHGAGAPRKRPSNR). Gly residues predominate over residues 8–19 (NAGGGCPLGHGA). The tryptophyl-tyrosyl-methioninium (Trp-Tyr) (with M-248) cross-link spans 100–222 (WHSAGTYRIT…LGAVQMGLIY (123 aa)). The Proton acceptor role is filled by histidine 101. The segment at residues 222–248 (YVNPEGPNGNPDPKAAAVDIRETFARM) is a cross-link (tryptophyl-tyrosyl-methioninium (Tyr-Met) (with W-100)). Histidine 263 contacts heme b.

Belongs to the peroxidase family. Peroxidase/catalase subfamily. In terms of assembly, homodimer or homotetramer. The cofactor is heme b. Formation of the three residue Trp-Tyr-Met cross-link is important for the catalase, but not the peroxidase activity of the enzyme.

The enzyme catalyses H2O2 + AH2 = A + 2 H2O. The catalysed reaction is 2 H2O2 = O2 + 2 H2O. Its function is as follows. Bifunctional enzyme with both catalase and broad-spectrum peroxidase activity. The polypeptide is Catalase-peroxidase (Stutzerimonas stutzeri (strain A1501) (Pseudomonas stutzeri)).